Reading from the N-terminus, the 109-residue chain is B melanoma antigen 3 (109 aa).

A signal peptide spans 1–17; it reads MAAGVVFLALSAQLLQA.

This sequence belongs to the BAGE family. Not expressed in normal tissues except in testis. Expressed in melanoma, bladder and lung carcinomas.

It localises to the secreted. Unknown. Candidate gene encoding tumor antigens. The protein is B melanoma antigen 3 (BAGE3) of Homo sapiens (Human).